The primary structure comprises 185 residues: Ribosome-recycling factor (185 aa).

Over residues Asp131–Ser155 the composition is skewed to basic and acidic residues. The tract at residues Asp131–Ala156 is disordered.

Belongs to the RRF family.

The protein localises to the cytoplasm. Its function is as follows. Responsible for the release of ribosomes from messenger RNA at the termination of protein biosynthesis. May increase the efficiency of translation by recycling ribosomes from one round of translation to another. The protein is Ribosome-recycling factor of Sulfurimonas denitrificans (strain ATCC 33889 / DSM 1251) (Thiomicrospira denitrificans (strain ATCC 33889 / DSM 1251)).